Here is a 349-residue protein sequence, read N- to C-terminus: Nicotinate-nucleotide--dimethylbenzimidazole phosphoribosyltransferase (349 aa).

Glu313 serves as the catalytic Proton acceptor.

It belongs to the CobT family.

The enzyme catalyses 5,6-dimethylbenzimidazole + nicotinate beta-D-ribonucleotide = alpha-ribazole 5'-phosphate + nicotinate + H(+). It participates in nucleoside biosynthesis; alpha-ribazole biosynthesis; alpha-ribazole from 5,6-dimethylbenzimidazole: step 1/2. Its function is as follows. Catalyzes the synthesis of alpha-ribazole-5'-phosphate from nicotinate mononucleotide (NAMN) and 5,6-dimethylbenzimidazole (DMB). In Mycobacterium avium (strain 104), this protein is Nicotinate-nucleotide--dimethylbenzimidazole phosphoribosyltransferase.